A 192-amino-acid polypeptide reads, in one-letter code: Fe/S biogenesis protein NfuA (192 aa).

[4Fe-4S] cluster is bound by residues cysteine 149 and cysteine 152.

It belongs to the NfuA family. In terms of assembly, homodimer. [4Fe-4S] cluster serves as cofactor.

Functionally, involved in iron-sulfur cluster biogenesis. Binds a 4Fe-4S cluster, can transfer this cluster to apoproteins, and thereby intervenes in the maturation of Fe/S proteins. Could also act as a scaffold/chaperone for damaged Fe/S proteins. This is Fe/S biogenesis protein NfuA from Shewanella denitrificans (strain OS217 / ATCC BAA-1090 / DSM 15013).